The sequence spans 109 residues: Aquaporin-2 (109 aa).

At 1–6 (SIAFSR) the chain is on the cytoplasmic side. Residues 7–27 (AVFSEFLATLLFVFFGLGSAL) traverse the membrane as a helical segment. Residues 28–35 (NWPQALPS) are Extracellular-facing. Residues 36-54 (VLQIAMAFGLAIGTLVQAL) form a helical membrane-spanning segment. Residues 55 to 59 (GHISG) lie on the Cytoplasmic side of the membrane. The segment at residues 60-69 (AHINPAVTVA) is an intramembrane region (discontinuously helical). Positions 63–65 (NPA) match the NPA 1 motif. The Cytoplasmic portion of the chain corresponds to 70–80 (CLVGCHVSFLR). A helical transmembrane segment spans residues 81–102 (ATFYLAAQLLGAVAGAAILHEI). At 103–109 (TPPDIRG) the chain is on the extracellular side.

Belongs to the MIP/aquaporin (TC 1.A.8) family. In terms of assembly, homotetramer. Serine phosphorylation is necessary and sufficient for expression at the apical membrane. Endocytosis is not phosphorylation-dependent. Post-translationally, N-glycosylated.

The protein resides in the apical cell membrane. It localises to the basolateral cell membrane. It is found in the cell membrane. The protein localises to the cytoplasmic vesicle membrane. Its subcellular location is the golgi apparatus. The protein resides in the trans-Golgi network membrane. The enzyme catalyses H2O(in) = H2O(out). It catalyses the reaction glycerol(in) = glycerol(out). Functionally, forms a water-specific channel that provides the plasma membranes of renal collecting duct with high permeability to water, thereby permitting water to move in the direction of an osmotic gradient. Plays an essential role in renal water homeostasis. Could also be permeable to glycerol. The sequence is that of Aquaporin-2 from Dugong dugon (Dugong).